The primary structure comprises 57 residues: Potassium channel toxin alpha-KTx 8.5 (57 aa).

The signal sequence occupies residues 1–28; it reads MSRLYAIILIALVLNVIMTIMPDSKVEA. 3 cysteine pairs are disulfide-bonded: Cys-31–Cys-47, Cys-34–Cys-52, and Cys-38–Cys-54.

This sequence belongs to the short scorpion toxin superfamily. Potassium channel inhibitor family. Alpha-KTx 08 subfamily. In terms of tissue distribution, expressed by the venom gland.

Its subcellular location is the secreted. In terms of biological role, selectively inhibits voltage-gated potassium channels Kv1.2/KCNA2 (IC(50)=183 nM). In Odontobuthus doriae (Yellow Iranian scorpion), this protein is Potassium channel toxin alpha-KTx 8.5.